We begin with the raw amino-acid sequence, 374 residues long: Serpin B8 (374 aa).

This sequence belongs to the serpin family. Ov-serpin subfamily.

It is found in the cytoplasm. Has an important role in epithelial desmosome-mediated cell-cell adhesion. In Homo sapiens (Human), this protein is Serpin B8 (SERPINB8).